The sequence spans 141 residues: uncharacterized protein (141 aa).

Belongs to the mimivirus L163/R849 family.

This is an uncharacterized protein from Acanthamoeba polyphaga mimivirus (APMV).